The sequence spans 363 residues: Probable iron/ascorbate oxidoreductase DDB_G0283291 (363 aa).

The region spanning 197–306 (IFNYPSIISS…RISFPLFFDP (110 aa)) is the Fe2OG dioxygenase domain. H230, D232, and H286 together coordinate Fe cation. Position 297 (R297) interacts with 2-oxoglutarate.

Belongs to the iron/ascorbate-dependent oxidoreductase family. Fe(2+) serves as cofactor.

The sequence is that of Probable iron/ascorbate oxidoreductase DDB_G0283291 from Dictyostelium discoideum (Social amoeba).